The primary structure comprises 271 residues: 3'-phosphoadenosine 5'-phosphate phosphatase (271 aa).

The Mg(2+) site is built by Glu-73, Asp-91, Leu-93, Asp-94, and Asp-216. Glu-73 contributes to the substrate binding site. Residues 93 to 96 (LDGT) and Asp-216 contribute to the substrate site.

The protein belongs to the inositol monophosphatase superfamily. Homodimer. The cofactor is Mg(2+).

The catalysed reaction is adenosine 3',5'-bisphosphate + H2O = AMP + phosphate. The enzyme catalyses beta-D-fructose 1,6-bisphosphate + H2O = beta-D-fructose 6-phosphate + phosphate. It carries out the reaction a myo-inositol phosphate + H2O = myo-inositol + phosphate. Its pathway is sulfur metabolism; sulfate assimilation. Phosphatase with a broad specificity. Its primary physiological function is to dephosphorylate 3'-phosphoadenosine 5'-phosphate (PAP) and 3'-phosphoadenosine 5'-phosphosulfate (PAPS). Thus, plays a role in mycobacterial sulfur metabolism, since it can serve as a key regulator of the sulfate assimilation pathway by controlling the pools of PAP and PAPS in the cell. To a lesser extent, is also able to hydrolyze inositol 1-phosphate (I-1-P), fructose 1,6-bisphosphate (FBP) (to fructose 6-phosphate (F-6-P)) and AMP in vitro, but this might not be significant in vivo. The sequence is that of 3'-phosphoadenosine 5'-phosphate phosphatase (cysQ) from Mycobacterium leprae (strain TN).